The chain runs to 416 residues: Beta sliding clamp (416 aa).

The protein belongs to the beta sliding clamp family. In terms of assembly, forms a ring-shaped head-to-tail homodimer around DNA which binds and tethers DNA polymerases and other proteins to the DNA. The DNA replisome complex has a single clamp-loading complex (3 tau and 1 each of delta, delta', psi and chi subunits) which binds 3 Pol III cores (1 core on the leading strand and 2 on the lagging strand) each with a beta sliding clamp dimer. Additional proteins in the replisome are other copies of gamma, psi and chi, Ssb, DNA helicase and RNA primase.

It localises to the cytoplasm. In terms of biological role, confers DNA tethering and processivity to DNA polymerases and other proteins. Acts as a clamp, forming a ring around DNA (a reaction catalyzed by the clamp-loading complex) which diffuses in an ATP-independent manner freely and bidirectionally along dsDNA. Initially characterized for its ability to contact the catalytic subunit of DNA polymerase III (Pol III), a complex, multichain enzyme responsible for most of the replicative synthesis in bacteria; Pol III exhibits 3'-5' exonuclease proofreading activity. The beta chain is required for initiation of replication as well as for processivity of DNA replication. This chain is Beta sliding clamp (dnaN), found in Chlamydia trachomatis serovar D (strain ATCC VR-885 / DSM 19411 / UW-3/Cx).